A 271-amino-acid chain; its full sequence is MAAEPPADGRDPPADDGAAGDGAVESAAAEALLSAASEQLTLVYQGEVYVFDPVPPQKVQAVLLVLGGSDMPPGLVSMAVPTTFDEKSTTVAARRVASLMRFREKRKERCFDKKIRYSVRKEVAQKMKRRKGQFAGRADFGDGSCSSAPCGSTANGEDDHIRETHCQNCGISSRLTPAMRRGPAGPRSLCNACGLMWANKGTLRSPLNAPKMTVQHPADLSKTGDTDDSKANLCAEHNQTTMKTDTEMVPEQEQKADVLPPTKEEDSMATS.

Positions 1–23 are disordered; it reads MAAEPPADGRDPPADDGAAGDGA. A Tify domain is found at 33-68; that stretch reads LSAASEQLTLVYQGEVYVFDPVPPQKVQAVLLVLGG. The region spanning 95-137 is the CCT domain; the sequence is RVASLMRFREKRKERCFDKKIRYSVRKEVAQKMKRRKGQFAGR. Residues 166-193 form a GATA-type zinc finger; it reads CQNCGISSRLTPAMRRGPAGPRSLCNAC. Positions 238 to 271 are disordered; the sequence is NQTTMKTDTEMVPEQEQKADVLPPTKEEDSMATS. Positions 252 to 271 are enriched in basic and acidic residues; sequence QEQKADVLPPTKEEDSMATS.

Belongs to the type IV zinc-finger family. Class C subfamily.

The protein localises to the nucleus. In terms of biological role, transcriptional activator that specifically binds 5'-GATA-3' or 5'-GAT-3' motifs within gene promoters. The chain is GATA transcription factor 19 from Oryza sativa subsp. japonica (Rice).